The sequence spans 103 residues: Non-histone chromosomal protein 6 (103 aa).

2 disordered regions span residues Met-1 to Leu-30 and Lys-70 to Ser-103. Positions Pro-26–Asn-94 form a DNA-binding region, HMG box. The segment covering Lys-70 to Gln-91 has biased composition (basic and acidic residues).

Belongs to the NHP6 family. In terms of assembly, weakly associates with the stable heterodimer of ctc-1/pob3 and ctc-2/spt16 to form the FACT complex.

The protein localises to the nucleus. Its subcellular location is the chromosome. Functionally, DNA-binding protein that induces severe bending of DNA. Required for DNA-binding by the FACT complex, a general chromatin factor that acts to reorganize nucleosomes. The FACT complex is involved in multiple processes that require DNA as a template such as mRNA elongation, DNA replication and DNA repair. Also augments the fidelity of transcription by RNA polymerase III independently of any role in the FACT complex. This Neurospora crassa (strain ATCC 24698 / 74-OR23-1A / CBS 708.71 / DSM 1257 / FGSC 987) protein is Non-histone chromosomal protein 6 (nhp-1).